A 309-amino-acid chain; its full sequence is MPKVRTKDLIEQFQLELVSGEEGIHRPIDTSDLSRPGIEMAGFFTYYPADRVQLLGKTELTFFDTLTNDQKQERMKALCTEETPCIIVTRNQDVPKELLQASRESGVPLLRSSQTTTRLSSRLTNYLEGKLAPTTAVHGVLVDVYGVGVLIIGQSGVGKSETALELVKRGHRLVADDSVEIRQEDEDTLVGSSPDLIEHLLEIRGLGIINVMTLFGAGAVRNYKRITLVINLEIWDQNKNYDRLGLDEEKMKIIDTELTKITLPVRPGRNLAVIIEVAAMNFRLKRMGVNAAQQFSERLMSAIELGNQE.

Residues His-138 and Lys-159 contribute to the active site. 153-160 lines the ATP pocket; the sequence is GQSGVGKS. Ser-160 is a Mg(2+) binding site. The active-site Proton acceptor; for phosphorylation activity. Proton donor; for dephosphorylation activity is Asp-177. The segment at 201 to 210 is important for the catalytic mechanism of both phosphorylation and dephosphorylation; the sequence is LEIRGLGIIN. Glu-202 is a binding site for Mg(2+). Arg-243 is an active-site residue. Residues 264-269 form an important for the catalytic mechanism of dephosphorylation region; the sequence is PVRPGR.

It belongs to the HPrK/P family. Homohexamer. Requires Mg(2+) as cofactor.

The enzyme catalyses [HPr protein]-L-serine + ATP = [HPr protein]-O-phospho-L-serine + ADP + H(+). It carries out the reaction [HPr protein]-O-phospho-L-serine + phosphate + H(+) = [HPr protein]-L-serine + diphosphate. Its function is as follows. Catalyzes the ATP- as well as the pyrophosphate-dependent phosphorylation of a specific serine residue in HPr, a phosphocarrier protein of the phosphoenolpyruvate-dependent sugar phosphotransferase system (PTS). HprK/P also catalyzes the pyrophosphate-producing, inorganic phosphate-dependent dephosphorylation (phosphorolysis) of seryl-phosphorylated HPr (P-Ser-HPr). The two antagonistic activities of HprK/P are regulated by several intracellular metabolites, which change their concentration in response to the absence or presence of rapidly metabolisable carbon sources (glucose, fructose, etc.) in the growth medium. Also phosphorylates/dephosphorylates the HPr-like catabolite repression protein crh on a specific serine residue. Therefore, by controlling the phosphorylation state of HPr and crh, HPrK/P is a sensor enzyme that plays a major role in the regulation of carbon metabolism and sugar transport: it mediates carbon catabolite repression (CCR), and regulates PTS-catalyzed carbohydrate uptake and inducer exclusion. The protein is HPr kinase/phosphorylase of Bacillus cytotoxicus (strain DSM 22905 / CIP 110041 / 391-98 / NVH 391-98).